The chain runs to 321 residues: Lipoyl synthase (321 aa).

[4Fe-4S] cluster-binding residues include cysteine 68, cysteine 73, cysteine 79, cysteine 94, cysteine 98, cysteine 101, and serine 308. In terms of domain architecture, Radical SAM core spans 80–297; sequence FNHGTATFMI…KEIALELGFT (218 aa).

It belongs to the radical SAM superfamily. Lipoyl synthase family. [4Fe-4S] cluster serves as cofactor.

Its subcellular location is the cytoplasm. The enzyme catalyses [[Fe-S] cluster scaffold protein carrying a second [4Fe-4S](2+) cluster] + N(6)-octanoyl-L-lysyl-[protein] + 2 oxidized [2Fe-2S]-[ferredoxin] + 2 S-adenosyl-L-methionine + 4 H(+) = [[Fe-S] cluster scaffold protein] + N(6)-[(R)-dihydrolipoyl]-L-lysyl-[protein] + 4 Fe(3+) + 2 hydrogen sulfide + 2 5'-deoxyadenosine + 2 L-methionine + 2 reduced [2Fe-2S]-[ferredoxin]. It functions in the pathway protein modification; protein lipoylation via endogenous pathway; protein N(6)-(lipoyl)lysine from octanoyl-[acyl-carrier-protein]: step 2/2. In terms of biological role, catalyzes the radical-mediated insertion of two sulfur atoms into the C-6 and C-8 positions of the octanoyl moiety bound to the lipoyl domains of lipoate-dependent enzymes, thereby converting the octanoylated domains into lipoylated derivatives. The polypeptide is Lipoyl synthase (Vibrio campbellii (strain ATCC BAA-1116)).